We begin with the raw amino-acid sequence, 234 residues long: Enolase-phosphatase E1 (234 aa).

The tract at residues 212 to 234 (RPGNYPQPQHSHFKISSFEGLNP) is disordered.

The protein belongs to the HAD-like hydrolase superfamily. MasA/MtnC family. As to quaternary structure, monomer. It depends on Mg(2+) as a cofactor.

It catalyses the reaction 5-methylsulfanyl-2,3-dioxopentyl phosphate + H2O = 1,2-dihydroxy-5-(methylsulfanyl)pent-1-en-3-one + phosphate. It functions in the pathway amino-acid biosynthesis; L-methionine biosynthesis via salvage pathway; L-methionine from S-methyl-5-thio-alpha-D-ribose 1-phosphate: step 3/6. Its pathway is amino-acid biosynthesis; L-methionine biosynthesis via salvage pathway; L-methionine from S-methyl-5-thio-alpha-D-ribose 1-phosphate: step 4/6. In terms of biological role, bifunctional enzyme that catalyzes the enolization of 2,3-diketo-5-methylthiopentyl-1-phosphate (DK-MTP-1-P) into the intermediate 2-hydroxy-3-keto-5-methylthiopentenyl-1-phosphate (HK-MTPenyl-1-P), which is then dephosphorylated to form the acireductone 1,2-dihydroxy-3-keto-5-methylthiopentene (DHK-MTPene). The polypeptide is Enolase-phosphatase E1 (Leptospira interrogans serogroup Icterohaemorrhagiae serovar copenhageni (strain Fiocruz L1-130)).